Here is a 157-residue protein sequence, read N- to C-terminus: MIRIGQGYDVHKLDYDRELIIGGIKIPYEKGLLGHSDADVLLHAITDAIIGAIGALDIGHFFPDTDMAYKDADSAELLAEIWRQVEAEGFKLGNLDATIIAEKPKMAPYVELMKRRIAELLHAEPSQVNVKATTTEKLGFTGREEGIASLAVVLLEK.

A divalent metal cation is bound by residues aspartate 9 and histidine 11. Residues 9–11 (DVH) and 35–36 (HS) contribute to the 4-CDP-2-C-methyl-D-erythritol 2-phosphate site. Histidine 43 provides a ligand contact to a divalent metal cation. Residues 57-59 (DIG), 62-66 (FPDTD), 101-107 (AEKPKMA), 133-136 (TTTE), phenylalanine 140, and arginine 143 each bind 4-CDP-2-C-methyl-D-erythritol 2-phosphate.

Belongs to the IspF family. As to quaternary structure, homotrimer. The cofactor is a divalent metal cation.

It catalyses the reaction 4-CDP-2-C-methyl-D-erythritol 2-phosphate = 2-C-methyl-D-erythritol 2,4-cyclic diphosphate + CMP. It functions in the pathway isoprenoid biosynthesis; isopentenyl diphosphate biosynthesis via DXP pathway; isopentenyl diphosphate from 1-deoxy-D-xylulose 5-phosphate: step 4/6. In terms of biological role, involved in the biosynthesis of isopentenyl diphosphate (IPP) and dimethylallyl diphosphate (DMAPP), two major building blocks of isoprenoid compounds. Catalyzes the conversion of 4-diphosphocytidyl-2-C-methyl-D-erythritol 2-phosphate (CDP-ME2P) to 2-C-methyl-D-erythritol 2,4-cyclodiphosphate (ME-CPP) with a corresponding release of cytidine 5-monophosphate (CMP). This is 2-C-methyl-D-erythritol 2,4-cyclodiphosphate synthase from Listeria innocua serovar 6a (strain ATCC BAA-680 / CLIP 11262).